The following is a 345-amino-acid chain: NADPH dehydrogenase (345 aa).

An FMN-binding site is contributed by S23 to C26. Y28 lines the substrate pocket. FMN-binding residues include A60 and Q102. Residue H164–H167 coordinates substrate. FMN-binding positions include R215 and G307–R308.

Belongs to the NADH:flavin oxidoreductase/NADH oxidase family. NamA subfamily. In terms of assembly, homotetramer. The cofactor is FMN.

It catalyses the reaction A + NADPH + H(+) = AH2 + NADP(+). In terms of biological role, catalyzes the reduction of the double bond of an array of alpha,beta-unsaturated aldehydes and ketones. It also reduces the nitro group of nitroester and nitroaromatic compounds. It could have a role in detoxification processes. The sequence is that of NADPH dehydrogenase from Bacillus cereus (strain B4264).